An 85-amino-acid polypeptide reads, in one-letter code: MKVTLIVILTCAAVLVLHTTAAEELEAESQLMEVGMPDTELAAVDEERLFECSVSCEIEKEGNKDCKKKKCKGGWKCKFNMCVKV.

The first 22 residues, 1 to 22, serve as a signal peptide directing secretion; the sequence is MKVTLIVILTCAAVLVLHTTAA. Positions 23 to 48 are excised as a propeptide; it reads EELEAESQLMEVGMPDTELAAVDEER. Cystine bridges form between Cys-52-Cys-66, Cys-56-Cys-77, and Cys-71-Cys-82.

This sequence belongs to the neurotoxin 12 (Hwtx-2) family. 02 (Hwtx-2) subfamily. Monomer. In terms of tissue distribution, expressed by the venom gland.

It localises to the secreted. Functionally, neurotoxin active on both insects and mammals. This Cyriopagopus hainanus (Chinese bird spider) protein is U4-theraphotoxin-Hhn1a.